Consider the following 900-residue polypeptide: UPF0182 protein Ppro_3567 (900 aa).

7 helical membrane passes run 15–35, 60–80, 112–132, 174–194, 210–230, 257–277, and 282–302; these read FFPL…LLNL, GAGL…LHVA, VSML…AMKW, FIIL…GGIL, LAVL…LDSF, VLTF…WKGV, and LLAP…YPGV.

This sequence belongs to the UPF0182 family.

It is found in the cell membrane. This is UPF0182 protein Ppro_3567 from Pelobacter propionicus (strain DSM 2379 / NBRC 103807 / OttBd1).